We begin with the raw amino-acid sequence, 451 residues long: Metalloprotease MJ0996 (451 aa).

It belongs to the peptidase U62 family.

Probable metalloprotease. This Methanocaldococcus jannaschii (strain ATCC 43067 / DSM 2661 / JAL-1 / JCM 10045 / NBRC 100440) (Methanococcus jannaschii) protein is Metalloprotease MJ0996.